A 354-amino-acid polypeptide reads, in one-letter code: Uroporphyrinogen decarboxylase (354 aa).

Substrate contacts are provided by residues 27–31 (RQAGR), Asp77, Tyr154, Ser209, and His327.

It belongs to the uroporphyrinogen decarboxylase family. As to quaternary structure, homodimer.

Its subcellular location is the cytoplasm. It carries out the reaction uroporphyrinogen III + 4 H(+) = coproporphyrinogen III + 4 CO2. The protein operates within porphyrin-containing compound metabolism; protoporphyrin-IX biosynthesis; coproporphyrinogen-III from 5-aminolevulinate: step 4/4. Catalyzes the decarboxylation of four acetate groups of uroporphyrinogen-III to yield coproporphyrinogen-III. The chain is Uroporphyrinogen decarboxylase from Pseudoalteromonas translucida (strain TAC 125).